The chain runs to 515 residues: G-protein coupled receptor 176 (515 aa).

Residues 1-16 (MGHNGSWISPNASEPH) are compositionally biased toward polar residues. Residues 1–20 (MGHNGSWISPNASEPHNASG) are disordered. Residues 1–42 (MGHNGSWISPNASEPHNASGAEAAGVNRSALGEFGEAQLYRQ) are Extracellular-facing. 4 N-linked (GlcNAc...) asparagine glycosylation sites follow: N4, N11, N17, and N27. Residues 43–63 (FTTTVQVVIFIGSLLGNFMVL) form a helical membrane-spanning segment. Topologically, residues 64–82 (WSTCRTTVFKSVTNRFIKN) are cytoplasmic. Residues 83–103 (LACSGICASLVCVPFDIILST) traverse the membrane as a helical segment. Over 104–118 (SPHCCWWIYTMLFCK) the chain is Extracellular. Residues 119–139 (VVKFLHKVFCSVTILSFPAIA) traverse the membrane as a helical segment. The Cytoplasmic segment spans residues 140-160 (LDRYYSVLYPLERKISDAKSR). Residues 161 to 181 (ELVMYIWAHAVVASVPVFAVT) form a helical membrane-spanning segment. The Extracellular segment spans residues 182 to 207 (NVADIYATSTCTEVWSNSLGHLVYVL). A helical membrane pass occupies residues 208 to 228 (VYNITTVIVPVVVVFLFLILI). Over 229–267 (RRALSASQKKKVIIAALRTPQNTISIPYASQREAELHAT) the chain is Cytoplasmic. The chain crosses the membrane as a helical span at residues 268 to 288 (LLSMVMVFILCSVPYATLVVY). The Extracellular segment spans residues 289 to 299 (QTVLNVPDTSV). The chain crosses the membrane as a helical span at residues 300 to 320 (FLLLTAVWLPKVSLLANPVLF). Over 321-515 (LTVNKSVRKC…KVSIFPKVDS (195 aa)) the chain is Cytoplasmic.

It belongs to the G-protein coupled receptor 1 family.

The protein localises to the cell membrane. Functionally, orphan receptor involved in normal circadian rhythm behavior. Acts through the G-protein subclass G(z)-alpha and has an agonist-independent basal activity to repress cAMP production. This Homo sapiens (Human) protein is G-protein coupled receptor 176 (GPR176).